Reading from the N-terminus, the 350-residue chain is Arginine/serine-rich coiled-coil protein 2 (350 aa).

Disordered regions lie at residues 1 to 146 and 328 to 350; these read MIRT…FRGR and SQTHTQRGMGLGFTSSMRGMDAV. The segment covering 10 to 24 has biased composition (basic residues); that stretch reads QARRHEVKAKSSKKH. Residues 25-51 show a composition bias toward basic and acidic residues; it reads RSDDTVDRDHSDKIRDRLNSSENGDEK. The segment covering 52 to 132 has biased composition (basic residues); that stretch reads HRRKEKRSSR…IEKPRRHSRS (81 aa). Positions 146–187 form a coiled coil; the sequence is RNAAMDAQEALARRLERAKKLQEQREKESAEKQQEIAAVAAA.

This sequence belongs to the RSRC2 family.

The polypeptide is Arginine/serine-rich coiled-coil protein 2 (rsrc2) (Xenopus laevis (African clawed frog)).